Consider the following 837-residue polypeptide: Ribosome-releasing factor 2, mitochondrial (837 aa).

The N-terminal 29 residues, 1–29 (MFSINARTKVPIWVPFIARKGFSMSTRQL), are a transit peptide targeting the mitochondrion. A tr-type G domain is found at 40–331 (LNTRNIGIIA…GVVDYLPSPL (292 aa)). GTP is bound by residues 49–56 (AHIDAGKT), 113–117 (DTPGH), and 167–170 (NKMD). The tract at residues 338-359 (ITASTSKVSKKQKQKKNSKVSS) is disordered. Residues 345-355 (VSKKQKQKKNS) are compositionally biased toward basic residues.

Belongs to the TRAFAC class translation factor GTPase superfamily. Classic translation factor GTPase family. EF-G/EF-2 subfamily.

The protein localises to the mitochondrion. Mitochondrial GTPase that mediates the disassembly of ribosomes from messenger RNA at the termination of mitochondrial protein biosynthesis. Not involved in the GTP-dependent ribosomal translocation step during translation elongation. This is Ribosome-releasing factor 2, mitochondrial from Meyerozyma guilliermondii (strain ATCC 6260 / CBS 566 / DSM 6381 / JCM 1539 / NBRC 10279 / NRRL Y-324) (Yeast).